The sequence spans 448 residues: Exodeoxyribonuclease 7 large subunit (448 aa).

The protein belongs to the XseA family. Heterooligomer composed of large and small subunits.

Its subcellular location is the cytoplasm. The protein resides in the nucleoid. It carries out the reaction Exonucleolytic cleavage in either 5'- to 3'- or 3'- to 5'-direction to yield nucleoside 5'-phosphates.. Bidirectionally degrades single-stranded DNA into large acid-insoluble oligonucleotides, which are then degraded further into small acid-soluble oligonucleotides. In Bacillus subtilis (strain 168), this protein is Exodeoxyribonuclease 7 large subunit.